We begin with the raw amino-acid sequence, 339 residues long: DNA-directed RNA polymerase subunit alpha (339 aa).

The tract at residues 1–235 is alpha N-terminal domain (alpha-NTD); the sequence is MVIQKNWQEL…DQLQVFVNFE (235 aa). Positions 251–339 are alpha C-terminal domain (alpha-CTD); the sequence is FNPALLKKVD…DLAKRFEEHY (89 aa).

This sequence belongs to the RNA polymerase alpha chain family. Homodimer. The RNAP catalytic core consists of 2 alpha, 1 beta, 1 beta' and 1 omega subunit. When a sigma factor is associated with the core the holoenzyme is formed, which can initiate transcription.

It carries out the reaction RNA(n) + a ribonucleoside 5'-triphosphate = RNA(n+1) + diphosphate. Functionally, DNA-dependent RNA polymerase catalyzes the transcription of DNA into RNA using the four ribonucleoside triphosphates as substrates. This Methylorubrum populi (strain ATCC BAA-705 / NCIMB 13946 / BJ001) (Methylobacterium populi) protein is DNA-directed RNA polymerase subunit alpha.